The following is a 364-amino-acid chain: UDP-N-acetylglucosamine--N-acetylmuramyl-(pentapeptide) pyrophosphoryl-undecaprenol N-acetylglucosamine transferase (364 aa).

UDP-N-acetyl-alpha-D-glucosamine-binding positions include 13–15 (TGG), Asn-125, Arg-165, Ser-192, and Gln-293.

Belongs to the glycosyltransferase 28 family. MurG subfamily.

The protein localises to the cell inner membrane. The catalysed reaction is di-trans,octa-cis-undecaprenyl diphospho-N-acetyl-alpha-D-muramoyl-L-alanyl-D-glutamyl-meso-2,6-diaminopimeloyl-D-alanyl-D-alanine + UDP-N-acetyl-alpha-D-glucosamine = di-trans,octa-cis-undecaprenyl diphospho-[N-acetyl-alpha-D-glucosaminyl-(1-&gt;4)]-N-acetyl-alpha-D-muramoyl-L-alanyl-D-glutamyl-meso-2,6-diaminopimeloyl-D-alanyl-D-alanine + UDP + H(+). It participates in cell wall biogenesis; peptidoglycan biosynthesis. Cell wall formation. Catalyzes the transfer of a GlcNAc subunit on undecaprenyl-pyrophosphoryl-MurNAc-pentapeptide (lipid intermediate I) to form undecaprenyl-pyrophosphoryl-MurNAc-(pentapeptide)GlcNAc (lipid intermediate II). The sequence is that of UDP-N-acetylglucosamine--N-acetylmuramyl-(pentapeptide) pyrophosphoryl-undecaprenol N-acetylglucosamine transferase from Cereibacter sphaeroides (strain ATCC 17029 / ATH 2.4.9) (Rhodobacter sphaeroides).